We begin with the raw amino-acid sequence, 311 residues long: Ribosomal RNA small subunit methyltransferase H (311 aa).

S-adenosyl-L-methionine is bound by residues 32–34, D52, F79, D100, and Q107; that span reads AGH.

The protein belongs to the methyltransferase superfamily. RsmH family.

The protein resides in the cytoplasm. It carries out the reaction cytidine(1402) in 16S rRNA + S-adenosyl-L-methionine = N(4)-methylcytidine(1402) in 16S rRNA + S-adenosyl-L-homocysteine + H(+). Specifically methylates the N4 position of cytidine in position 1402 (C1402) of 16S rRNA. The sequence is that of Ribosomal RNA small subunit methyltransferase H from Staphylococcus haemolyticus (strain JCSC1435).